The primary structure comprises 605 residues: Pyruvate decarboxylase 1 (605 aa).

D67 and H154 together coordinate substrate. Residues 432–514 form a thiamine pyrophosphate binding region; sequence DSWFNCQKLR…FLINNGGYTI (83 aa). Residues D482, N509, and G511 each contribute to the Mg(2+) site. Position 515 (E515) interacts with substrate.

Belongs to the TPP enzyme family. In terms of assembly, homotetramer. Requires a metal cation as cofactor. The cofactor is thiamine diphosphate.

It catalyses the reaction a 2-oxocarboxylate + H(+) = an aldehyde + CO2. In Oryza sativa subsp. japonica (Rice), this protein is Pyruvate decarboxylase 1 (PDC1).